A 221-amino-acid polypeptide reads, in one-letter code: Octanoyltransferase (221 aa).

Positions 36 to 221 constitute a BPL/LPL catalytic domain; the sequence is KKEDNQLFFC…LRSIFMEIFA (186 aa). Residues 81-88, 154-156, and 167-169 each bind substrate; these read RGGDITYH, AIG, and GFA. C185 (acyl-thioester intermediate) is an active-site residue.

Belongs to the LipB family.

It localises to the cytoplasm. It catalyses the reaction octanoyl-[ACP] + L-lysyl-[protein] = N(6)-octanoyl-L-lysyl-[protein] + holo-[ACP] + H(+). It functions in the pathway protein modification; protein lipoylation via endogenous pathway; protein N(6)-(lipoyl)lysine from octanoyl-[acyl-carrier-protein]: step 1/2. In terms of biological role, catalyzes the transfer of endogenously produced octanoic acid from octanoyl-acyl-carrier-protein onto the lipoyl domains of lipoate-dependent enzymes. Lipoyl-ACP can also act as a substrate although octanoyl-ACP is likely to be the physiological substrate. This Parabacteroides distasonis (strain ATCC 8503 / DSM 20701 / CIP 104284 / JCM 5825 / NCTC 11152) protein is Octanoyltransferase.